Reading from the N-terminus, the 250-residue chain is Phosphoribosylaminoimidazole-succinocarboxamide synthase (250 aa).

Belongs to the SAICAR synthetase family.

It catalyses the reaction 5-amino-1-(5-phospho-D-ribosyl)imidazole-4-carboxylate + L-aspartate + ATP = (2S)-2-[5-amino-1-(5-phospho-beta-D-ribosyl)imidazole-4-carboxamido]succinate + ADP + phosphate + 2 H(+). The protein operates within purine metabolism; IMP biosynthesis via de novo pathway; 5-amino-1-(5-phospho-D-ribosyl)imidazole-4-carboxamide from 5-amino-1-(5-phospho-D-ribosyl)imidazole-4-carboxylate: step 1/2. This chain is Phosphoribosylaminoimidazole-succinocarboxamide synthase, found in Synechococcus sp. (strain CC9605).